The sequence spans 1410 residues: DNA-directed RNA polymerase subunit beta' (1410 aa).

Positions 69, 71, 84, and 87 each coordinate Zn(2+). Residues Asp461, Asp463, and Asp465 each contribute to the Mg(2+) site. Positions 810, 884, 891, and 894 each coordinate Zn(2+).

It belongs to the RNA polymerase beta' chain family. As to quaternary structure, the RNAP catalytic core consists of 2 alpha, 1 beta, 1 beta' and 1 omega subunit. When a sigma factor is associated with the core the holoenzyme is formed, which can initiate transcription. Mg(2+) serves as cofactor. It depends on Zn(2+) as a cofactor.

It carries out the reaction RNA(n) + a ribonucleoside 5'-triphosphate = RNA(n+1) + diphosphate. In terms of biological role, DNA-dependent RNA polymerase catalyzes the transcription of DNA into RNA using the four ribonucleoside triphosphates as substrates. The polypeptide is DNA-directed RNA polymerase subunit beta' (Ehrlichia chaffeensis (strain ATCC CRL-10679 / Arkansas)).